The following is a 75-amino-acid chain: Peptide Ctri9610 (75 aa).

The signal sequence occupies residues 1–22 (MNSKYLFVFLILNVIFIDLCQG). At Lys41 the chain carries Lysine amide. The propeptide occupies 42–75 (GTRRRELGSQYDYLQDFRKRELDLDDLLSKFPDY).

Belongs to the non-disulfide-bridged peptide (NDBP) superfamily. Short antimicrobial peptide (group 4) family. As to expression, expressed by the venom gland.

The protein localises to the secreted. This Chaerilus tricostatus (Scorpion) protein is Peptide Ctri9610.